The sequence spans 557 residues: Arginine--tRNA ligase (557 aa).

Positions 132–142 (ANPTGDLHLGH) match the 'HIGH' region motif.

Belongs to the class-I aminoacyl-tRNA synthetase family. Monomer.

Its subcellular location is the cytoplasm. It carries out the reaction tRNA(Arg) + L-arginine + ATP = L-arginyl-tRNA(Arg) + AMP + diphosphate. The protein is Arginine--tRNA ligase of Bacillus pumilus (strain SAFR-032).